Here is a 304-residue protein sequence, read N- to C-terminus: GTPase Era (304 aa).

Residues 9–177 enclose the Era-type G domain; it reads HSGFVAIVGR…VTTLSQHMPE (169 aa). Positions 17-24 are G1; sequence GRPNVGKS. Residue 17–24 coordinates GTP; it reads GRPNVGKS. The segment at 43 to 47 is G2; sequence QTTRN. A G3 region spans residues 64–67; sequence DTPG. GTP-binding positions include 64–68 and 127–130; these read DTPGI and NKID. A G4 region spans residues 127–130; that stretch reads NKID. A G5 region spans residues 156–158; the sequence is ISA. The 78-residue stretch at 208–285 folds into the KH type-2 domain; the sequence is TRQEVPHSVA…YLELWVKVSE (78 aa).

Belongs to the TRAFAC class TrmE-Era-EngA-EngB-Septin-like GTPase superfamily. Era GTPase family. Monomer.

The protein localises to the cytoplasm. It localises to the cell membrane. Functionally, an essential GTPase that binds both GDP and GTP, with rapid nucleotide exchange. Plays a role in 16S rRNA processing and 30S ribosomal subunit biogenesis and possibly also in cell cycle regulation and energy metabolism. The sequence is that of GTPase Era from Pediococcus pentosaceus (strain ATCC 25745 / CCUG 21536 / LMG 10740 / 183-1w).